The chain runs to 283 residues: Pantothenate synthetase (283 aa).

30–37 provides a ligand contact to ATP; it reads MGNLHDGH. H37 serves as the catalytic Proton donor. Q61 contributes to the (R)-pantoate binding site. Q61 contributes to the beta-alanine binding site. An ATP-binding site is contributed by 149–152; the sequence is GEKD. Residue Q155 participates in (R)-pantoate binding. 186–189 contacts ATP; it reads LSSR.

The protein belongs to the pantothenate synthetase family. In terms of assembly, homodimer.

It localises to the cytoplasm. The enzyme catalyses (R)-pantoate + beta-alanine + ATP = (R)-pantothenate + AMP + diphosphate + H(+). The protein operates within cofactor biosynthesis; (R)-pantothenate biosynthesis; (R)-pantothenate from (R)-pantoate and beta-alanine: step 1/1. Its function is as follows. Catalyzes the condensation of pantoate with beta-alanine in an ATP-dependent reaction via a pantoyl-adenylate intermediate. The sequence is that of Pantothenate synthetase from Escherichia coli O127:H6 (strain E2348/69 / EPEC).